The following is a 1192-amino-acid chain: Pyruvate carboxylase (1192 aa).

The segment at 1–23 (MAAPRQPEEAVDDTEFIDDHHDQ) is disordered. A Biotin carboxylation domain is found at 40–492 (QFQKILVANR…WTTFIDDTPE (453 aa)). ATP-binding residues include Lys-158, Glu-242, and His-277. The 198-residue stretch at 162–359 (RQLAIRCDVP…IVAAQIQIAA (198 aa)) folds into the ATP-grasp domain. The active site involves Arg-334. The region spanning 578 to 846 (CLIMDTTWRD…DPGLNSAQVR (269 aa)) is the Pyruvate carboxyltransferase domain. Substrate-binding positions include 586–590 (RDAHQ) and Arg-659. Asp-587 contacts a divalent metal cation. A divalent metal cation-binding residues include Lys-755, His-785, and His-787. Lys-755 is modified (N6-carboxylysine). Thr-920 is a substrate binding site. The Biotinyl-binding domain occupies 1115–1190 (KAELGDSSQV…DGQDLVCKIV (76 aa)). Position 1156 is an N6-biotinyllysine (Lys-1156).

It depends on biotin as a cofactor. The cofactor is Zn(2+).

The protein localises to the cytoplasm. The enzyme catalyses hydrogencarbonate + pyruvate + ATP = oxaloacetate + ADP + phosphate + H(+). It functions in the pathway carbohydrate biosynthesis; gluconeogenesis. Functionally, pyruvate carboxylase catalyzes a 2-step reaction, involving the ATP-dependent carboxylation of the covalently attached biotin in the first step and the transfer of the carboxyl group to pyruvate in the second. The chain is Pyruvate carboxylase (pyc) from Aspergillus niger.